A 623-amino-acid chain; its full sequence is Replication protein A 70 kDa DNA-binding subunit (623 aa).

Methionine 1 carries the N-acetylmethionine modification. Residues lysine 22 and lysine 88 each participate in a glycyl lysine isopeptide (Lys-Gly) (interchain with G-Cter in ubiquitin) cross-link. Residues valine 116 to threonine 163 are disordered. Positions glutamine 124–glutamine 154 are enriched in low complexity. Residues lysine 172 and lysine 176 each carry the N6-acetyllysine; alternate modification. Residues lysine 172 and lysine 176 each participate in a glycyl lysine isopeptide (Lys-Gly) (interchain with G-Cter in ubiquitin); alternate cross-link. Residue threonine 189 is modified to Phosphothreonine. Residue lysine 192 forms a Glycyl lysine isopeptide (Lys-Gly) (interchain with G-Cter in ubiquitin) linkage. A Phosphothreonine modification is found at threonine 200. Positions tryptophan 206–asparagine 290 form a DNA-binding region, OB. Glycyl lysine isopeptide (Lys-Gly) (interchain with G-Cter in ubiquitin) cross-links involve residues lysine 229 and lysine 253. Residue lysine 268 is modified to N6-acetyllysine; alternate. Lysine 268 is covalently cross-linked (Glycyl lysine isopeptide (Lys-Gly) (interchain with G-Cter in ubiquitin); alternate). Residues lysine 276 and lysine 340 each participate in a glycyl lysine isopeptide (Lys-Gly) (interchain with G-Cter in ubiquitin) cross-link. Serine 393 is modified (phosphoserine). Lysine 419 is covalently cross-linked (Glycyl lysine isopeptide (Lys-Gly) (interchain with G-Cter in ubiquitin)). Residue lysine 458 forms a Glycyl lysine isopeptide (Lys-Gly) (interchain with G-Cter in SUMO) linkage. A Glycyl lysine isopeptide (Lys-Gly) (interchain with G-Cter in ubiquitin) cross-link involves residue lysine 467. A C4-type zinc finger spans residues cysteine 490–cysteine 512. Lysine 562 is covalently cross-linked (Glycyl lysine isopeptide (Lys-Gly) (interchain with G-Cter in ubiquitin)). Lysine 586 participates in a covalent cross-link: Glycyl lysine isopeptide (Lys-Gly) (interchain with G-Cter in SUMO).

This sequence belongs to the replication factor A protein 1 family. As to quaternary structure, component of the canonical replication protein A complex (RPA), a heterotrimer composed of RPA1, RPA2 and RPA3. The DNA-binding activity may reside exclusively on the RPA1 subunit. Interacts with PRPF19; the PRP19-CDC5L complex is recruited to the sites of DNA repair where it ubiquitinates the replication protein A complex (RPA). Interacts with RIPK1. Interacts with the polymerase alpha subunit POLA1/p180; this interaction stabilizes the replicative complex and reduces the misincorporation rate of DNA polymerase alpha by acting as a fidelity clamp. Interacts with RAD51 and SENP6 to regulate DNA repair. Interacts with HELB; this interaction promotes HELB recruitment to chromatin following DNA damage. Interacts with PRIMPOL; leading to recruit PRIMPOL on chromatin and stimulate its DNA primase activity. Interacts with XPA; the interaction is direct and associates XPA with the RPA complex. Interacts with ETAA1; the interaction is direct and promotes ETAA1 recruitment at stalled replication forks. Interacts with RPA1; this interaction associates HROB with the RPA complex. Interacts (when poly-ADP-ribosylated) with HTATSF1. In terms of processing, DNA damage-induced 'Lys-63'-linked polyubiquitination by PRPF19 mediates ATRIP recruitment to the RPA complex at sites of DNA damage and activation of ATR. Ubiquitinated by RFWD3 at stalled replication forks in response to DNA damage: ubiquitination by RFWD3 does not lead to degradation by the proteasome and promotes removal of the RPA complex from stalled replication forks, promoting homologous recombination. Sumoylated on lysine residues Lys-458 and Lys-586, with Lys-458 being the major site. Sumoylation promotes recruitment of RAD51 to the DNA damage foci to initiate DNA repair through homologous recombination. Desumoylated by SENP6. Post-translationally, poly-ADP-ribosylated by PARP1; promoting recruitment of HTATSF1.

It localises to the nucleus. Its subcellular location is the PML body. Its function is as follows. As part of the heterotrimeric replication protein A complex (RPA/RP-A), binds and stabilizes single-stranded DNA intermediates, that form during DNA replication or upon DNA stress. It prevents their reannealing and in parallel, recruits and activates different proteins and complexes involved in DNA metabolism. Thereby, it plays an essential role both in DNA replication and the cellular response to DNA damage. In the cellular response to DNA damage, the RPA complex controls DNA repair and DNA damage checkpoint activation. Through recruitment of ATRIP activates the ATR kinase a master regulator of the DNA damage response. It is required for the recruitment of the DNA double-strand break repair factors RAD51 and RAD52 to chromatin in response to DNA damage. Also recruits to sites of DNA damage proteins like XPA and XPG that are involved in nucleotide excision repair and is required for this mechanism of DNA repair. Also plays a role in base excision repair (BER) probably through interaction with UNG. Also recruits SMARCAL1/HARP, which is involved in replication fork restart, to sites of DNA damage. May also play a role in telomere maintenance. This is Replication protein A 70 kDa DNA-binding subunit (Rpa1) from Mus musculus (Mouse).